Here is a 198-residue protein sequence, read N- to C-terminus: Cytochrome c oxidase assembly protein CtaG (198 aa).

The Cytoplasmic portion of the chain corresponds to 1-12 (MADTGQSDRKER). The helical; Signal-anchor for type II membrane protein transmembrane segment at 13–35 (SNGVIVGTCLAFVVGMVGMAYAA) threads the bilayer. Over 36–198 (VPLYDMFCRV…QVKSRTENKL (163 aa)) the chain is Periplasmic.

It belongs to the COX11/CtaG family.

The protein resides in the cell inner membrane. Exerts its effect at some terminal stage of cytochrome c oxidase synthesis, probably by being involved in the insertion of the copper B into subunit I. This Sinorhizobium medicae (strain WSM419) (Ensifer medicae) protein is Cytochrome c oxidase assembly protein CtaG.